Consider the following 634-residue polypeptide: DNA-directed RNA polymerase subunit gamma (634 aa).

Zn(2+) contacts are provided by Cys74, Cys76, Cys89, and Cys92. Mg(2+) contacts are provided by Asp471, Asp473, and Asp475.

Belongs to the RNA polymerase beta' chain family. RpoC1 subfamily. In terms of assembly, in cyanobacteria the RNAP catalytic core is composed of 2 alpha, 1 beta, 1 beta', 1 gamma and 1 omega subunit. When a sigma factor is associated with the core the holoenzyme is formed, which can initiate transcription. Mg(2+) serves as cofactor. It depends on Zn(2+) as a cofactor.

It catalyses the reaction RNA(n) + a ribonucleoside 5'-triphosphate = RNA(n+1) + diphosphate. DNA-dependent RNA polymerase catalyzes the transcription of DNA into RNA using the four ribonucleoside triphosphates as substrates. This is DNA-directed RNA polymerase subunit gamma from Prochlorococcus marinus (strain MIT 9313).